A 140-amino-acid polypeptide reads, in one-letter code: Zinc finger SWIM domain-containing protein 7 (140 aa).

Residues 76 to 114 (YTCFTSCHYCPCPAFSFTVLRRNESLMCKHLLAVILSQA) form an SWIM-type zinc finger.

Belongs to the SWS1 family.

It localises to the nucleus. Functionally, involved in early stages of the homologous recombination repair (HRR) pathway of double-stranded DNA breaks arising during DNA replication or induced by DNA-damaging agents. This Danio rerio (Zebrafish) protein is Zinc finger SWIM domain-containing protein 7 (zswim7).